A 342-amino-acid chain; its full sequence is Phosphate acyltransferase (342 aa).

Belongs to the PlsX family. In terms of assembly, homodimer. Probably interacts with PlsY.

It is found in the cytoplasm. The catalysed reaction is a fatty acyl-[ACP] + phosphate = an acyl phosphate + holo-[ACP]. Its pathway is lipid metabolism; phospholipid metabolism. Its function is as follows. Catalyzes the reversible formation of acyl-phosphate (acyl-PO(4)) from acyl-[acyl-carrier-protein] (acyl-ACP). This enzyme utilizes acyl-ACP as fatty acyl donor, but not acyl-CoA. The chain is Phosphate acyltransferase from Trichormus variabilis (strain ATCC 29413 / PCC 7937) (Anabaena variabilis).